The sequence spans 193 residues: Inosine triphosphate pyrophosphatase (193 aa).

ITP is bound at residue 10 to 15 (TGNANK). Glu42 contacts Mg(2+). ITP-binding positions include Lys54, 70 to 71 (DT), Lys87, 146 to 149 (FGWD), Lys169, and 174 to 175 (HR).

The protein belongs to the HAM1 NTPase family. Homodimer. Mg(2+) is required as a cofactor. Requires Mn(2+) as cofactor.

Its subcellular location is the cytoplasm. The protein resides in the nucleus. It catalyses the reaction ITP + H2O = IMP + diphosphate + H(+). It carries out the reaction dITP + H2O = dIMP + diphosphate + H(+). The catalysed reaction is XTP + H2O = XMP + diphosphate + H(+). Pyrophosphatase that hydrolyzes non-canonical purine nucleotides such as inosine triphosphate (ITP), deoxyinosine triphosphate (dITP) or xanthosine 5'-triphosphate (XTP) to their respective monophosphate derivatives. The enzyme does not distinguish between the deoxy- and ribose forms. Probably excludes non-canonical purines from RNA and DNA precursor pools, thus preventing their incorporation into RNA and DNA and avoiding chromosomal lesions. This is Inosine triphosphate pyrophosphatase from Mycosarcoma maydis (Corn smut fungus).